The sequence spans 375 residues: 23S rRNA (uracil(747)-C(5))-methyltransferase RlmC (375 aa).

Positions 3, 11, 14, and 87 each coordinate [4Fe-4S] cluster. Residues Q212, F241, E262, and N307 each coordinate S-adenosyl-L-methionine. C334 functions as the Nucleophile in the catalytic mechanism.

This sequence belongs to the class I-like SAM-binding methyltransferase superfamily. RNA M5U methyltransferase family. RlmC subfamily.

It catalyses the reaction uridine(747) in 23S rRNA + S-adenosyl-L-methionine = 5-methyluridine(747) in 23S rRNA + S-adenosyl-L-homocysteine + H(+). Its function is as follows. Catalyzes the formation of 5-methyl-uridine at position 747 (m5U747) in 23S rRNA. The polypeptide is 23S rRNA (uracil(747)-C(5))-methyltransferase RlmC (Escherichia fergusonii (strain ATCC 35469 / DSM 13698 / CCUG 18766 / IAM 14443 / JCM 21226 / LMG 7866 / NBRC 102419 / NCTC 12128 / CDC 0568-73)).